Consider the following 139-residue polypeptide: Cell division protein SepF (139 aa).

Belongs to the SepF family. As to quaternary structure, homodimer. Interacts with FtsZ.

It is found in the cytoplasm. Its function is as follows. Cell division protein that is part of the divisome complex and is recruited early to the Z-ring. Probably stimulates Z-ring formation, perhaps through the cross-linking of FtsZ protofilaments. Its function overlaps with FtsA. This chain is Cell division protein SepF, found in Coprothermobacter proteolyticus (strain ATCC 35245 / DSM 5265 / OCM 4 / BT).